Consider the following 76-residue polypeptide: Immune protein Tsi5 (76 aa).

The next 2 helical transmembrane spans lie at Leu19–Phe39 and Trp43–Tyr63.

The protein resides in the membrane. Its function is as follows. Immunity protein that plays a role in preventing early activation of toxin Tse5. This chain is Immune protein Tsi5, found in Pseudomonas aeruginosa (strain ATCC 15692 / DSM 22644 / CIP 104116 / JCM 14847 / LMG 12228 / 1C / PRS 101 / PAO1).